Reading from the N-terminus, the 294-residue chain is Pantothenate synthetase 3 (294 aa).

Residue 31-38 (MGALHEGH) participates in ATP binding. The Proton donor role is filled by His-38. Gln-62 serves as a coordination point for (R)-pantoate. Gln-62 contacts beta-alanine. 154-157 (GEKD) contributes to the ATP binding site. Gln-160 is a (R)-pantoate binding site. An ATP-binding site is contributed by 191–194 (LSSR).

The protein belongs to the pantothenate synthetase family. As to quaternary structure, homodimer.

It localises to the cytoplasm. It catalyses the reaction (R)-pantoate + beta-alanine + ATP = (R)-pantothenate + AMP + diphosphate + H(+). Its pathway is cofactor biosynthesis; (R)-pantothenate biosynthesis; (R)-pantothenate from (R)-pantoate and beta-alanine: step 1/1. Functionally, catalyzes the condensation of pantoate with beta-alanine in an ATP-dependent reaction via a pantoyl-adenylate intermediate. In Frankia alni (strain DSM 45986 / CECT 9034 / ACN14a), this protein is Pantothenate synthetase 3.